The following is a 172-amino-acid chain: uncharacterized protein (172 aa).

2 disordered regions span residues 1–54 (MPRR…GGSS) and 82–111 (ITGG…SVPE). The span at 14 to 29 (AAPARSASTAAALPPR) shows a compositional bias: low complexity. Residues 30–47 (TMAPPPAPSRVQQAPPPT) are compositionally biased toward pro residues. A compositionally biased stretch (polar residues) spans 89–109 (SGSNNAPADTSVPQSSYSNSV).

This is an uncharacterized protein from Schizosaccharomyces pombe (strain 972 / ATCC 24843) (Fission yeast).